Here is a 311-residue protein sequence, read N- to C-terminus: Transmembrane protein 177 (311 aa).

Over 1–17 (MAGPLWRTAAFVQRHRT) the chain is Mitochondrial matrix. The chain crosses the membrane as a helical span at residues 18–38 (GLLVGSCAGLFGVPISYHLFP). The Mitochondrial intermembrane portion of the chain corresponds to 39–166 (DPVVQWLYQY…EVVYLESSTT (128 aa)). A helical membrane pass occupies residues 167 to 187 (AVHALLAPACLAGTWALGVGA). Topologically, residues 188–197 (KYTLGLHAGP) are mitochondrial matrix. A helical transmembrane segment spans residues 198–218 (MNLRAAFSLVAAVAGFVAYAF). Over 219-311 (SQDSLTHAVE…WRGMLNPGRS (93 aa)) the chain is Mitochondrial intermembrane.

This sequence belongs to the TMEM177 family. Found in a complex with COX20, COA6, MT-CO2/COX2, COX18, SCO1 and SCO2. Interacts with COX20. Interacts with COX1, MT-CO2/COX2, SCO1 and SCO2 in a COX20-dependent manner.

The protein resides in the mitochondrion inner membrane. Its function is as follows. Plays a role in the early steps of cytochrome c oxidase subunit II (MT-CO2/COX2) maturation and is required for the stabilization of COX20 and the newly synthesized MT-CO2/COX2 protein. The polypeptide is Transmembrane protein 177 (TMEM177) (Homo sapiens (Human)).